We begin with the raw amino-acid sequence, 358 residues long: UPF0421 protein BT9727_2513 (358 aa).

A run of 4 helical transmembrane segments spans residues 19–39 (IAVFLTVLVCEFFNIPTIFAV), 74–94 (FTFFLGHQALSYALAAMFTIV), 109–129 (TLTAVAMIPITADHYFTAFLI), and 131–151 (LATTSTGIIVSTVVNFFILPP).

This sequence belongs to the UPF0421 family.

Its subcellular location is the cell membrane. The polypeptide is UPF0421 protein BT9727_2513 (Bacillus thuringiensis subsp. konkukian (strain 97-27)).